A 320-amino-acid chain; its full sequence is ATP-dependent 6-phosphofructokinase (320 aa).

ATP is bound at residue glycine 12. 22-26 (RGVVR) is a binding site for ADP. ATP is bound by residues 73-74 (RF) and 103-106 (GDGS). A Mg(2+)-binding site is contributed by aspartate 104. 126–128 (TID) provides a ligand contact to substrate. Residue aspartate 128 is the Proton acceptor of the active site. Arginine 155 is a binding site for ADP. Substrate is bound by residues arginine 163 and 170-172 (MGR). ADP-binding positions include 186–188 (GCE), lysine 212, and 214–216 (KKH). Substrate contacts are provided by residues glutamate 223, arginine 244, and 250 to 253 (HIQR).

The protein belongs to the phosphofructokinase type A (PFKA) family. ATP-dependent PFK group I subfamily. Prokaryotic clade 'B1' sub-subfamily. Homotetramer. Requires Mg(2+) as cofactor.

The protein localises to the cytoplasm. The enzyme catalyses beta-D-fructose 6-phosphate + ATP = beta-D-fructose 1,6-bisphosphate + ADP + H(+). Its pathway is carbohydrate degradation; glycolysis; D-glyceraldehyde 3-phosphate and glycerone phosphate from D-glucose: step 3/4. Its activity is regulated as follows. Allosterically activated by ADP and other diphosphonucleosides, and allosterically inhibited by phosphoenolpyruvate. Functionally, catalyzes the phosphorylation of D-fructose 6-phosphate to fructose 1,6-bisphosphate by ATP, the first committing step of glycolysis. This Vibrio campbellii (strain ATCC BAA-1116) protein is ATP-dependent 6-phosphofructokinase.